Here is a 505-residue protein sequence, read N- to C-terminus: Deoxyguanosinetriphosphate triphosphohydrolase (505 aa).

In terms of domain architecture, HD spans 66–273; that stretch reads RLTHSMEVQQ…MEAADDISYC (208 aa).

The protein belongs to the dGTPase family. Type 1 subfamily. As to quaternary structure, homotetramer. Requires Mg(2+) as cofactor.

It catalyses the reaction dGTP + H2O = 2'-deoxyguanosine + triphosphate + H(+). Functionally, dGTPase preferentially hydrolyzes dGTP over the other canonical NTPs. In Salmonella schwarzengrund (strain CVM19633), this protein is Deoxyguanosinetriphosphate triphosphohydrolase.